Reading from the N-terminus, the 142-residue chain is Ribosome-binding factor A (142 aa).

The tract at residues 118–142 is disordered; the sequence is DEAKQQEHGTVENAKQDGDKAEDDK.

This sequence belongs to the RbfA family. As to quaternary structure, monomer. Binds 30S ribosomal subunits, but not 50S ribosomal subunits or 70S ribosomes.

The protein localises to the cytoplasm. One of several proteins that assist in the late maturation steps of the functional core of the 30S ribosomal subunit. Associates with free 30S ribosomal subunits (but not with 30S subunits that are part of 70S ribosomes or polysomes). Required for efficient processing of 16S rRNA. May interact with the 5'-terminal helix region of 16S rRNA. In Shewanella piezotolerans (strain WP3 / JCM 13877), this protein is Ribosome-binding factor A.